Here is a 70-residue protein sequence, read N- to C-terminus: Small ribosomal subunit protein bS21 (70 aa).

Belongs to the bacterial ribosomal protein bS21 family.

In Nitratidesulfovibrio vulgaris (strain ATCC 29579 / DSM 644 / CCUG 34227 / NCIMB 8303 / VKM B-1760 / Hildenborough) (Desulfovibrio vulgaris), this protein is Small ribosomal subunit protein bS21.